The sequence spans 330 residues: Delta-aminolevulinic acid dehydratase (330 aa).

4 residues coordinate Zn(2+): Cys-122, Cys-124, His-131, and Cys-132. Catalysis depends on Lys-199, which acts as the Schiff-base intermediate with substrate. N6-succinyllysine is present on Lys-199. A 5-aminolevulinate-binding site is contributed by Arg-209. The residue at position 215 (Ser-215) is a Phosphoserine. Arg-221 contributes to the 5-aminolevulinate binding site. Cys-223 serves as a coordination point for Zn(2+). Lys-252 (schiff-base intermediate with substrate) is an active-site residue. N6-succinyllysine is present on Lys-252. 5-aminolevulinate contacts are provided by Ser-279 and Tyr-318.

It belongs to the ALAD family. In terms of assembly, homooctamer; active form. Homohexamer; low activity form. Zn(2+) serves as cofactor.

It localises to the cytoplasm. It is found in the cytosol. It carries out the reaction 2 5-aminolevulinate = porphobilinogen + 2 H2O + H(+). It functions in the pathway porphyrin-containing compound metabolism; protoporphyrin-IX biosynthesis; coproporphyrinogen-III from 5-aminolevulinate: step 1/4. Can alternate between a fully active homooctamer and a low-activity homohexamer. A bound magnesium ion may promote the assembly of the fully active homooctamer. The magnesium-binding site is absent in the low-activity homohexamer. Inhibited by compounds that favor the hexameric state. Inhibited by divalent lead ions. The lead ions partially displace the zinc cofactor. Its function is as follows. Catalyzes an early step in the biosynthesis of tetrapyrroles. Binds two molecules of 5-aminolevulinate per subunit, each at a distinct site, and catalyzes their condensation to form porphobilinogen. The polypeptide is Delta-aminolevulinic acid dehydratase (Alad) (Mus musculus (Mouse)).